Reading from the N-terminus, the 439-residue chain is GTPase Der (439 aa).

2 EngA-type G domains span residues 4 to 169 and 177 to 352; these read AMVS…PQEE and IKIA…EEYN. GTP-binding positions include 10 to 17, 57 to 61, 120 to 123, 183 to 190, 230 to 234, and 295 to 298; these read GRPNVGKS, DTGGL, NKVD, GKPNVGKS, DTAGI, and NKWD. In terms of domain architecture, KH-like spans 353 to 437; the sequence is KRITTGLLNN…PIVISTKKRG (85 aa).

It belongs to the TRAFAC class TrmE-Era-EngA-EngB-Septin-like GTPase superfamily. EngA (Der) GTPase family. As to quaternary structure, associates with the 50S ribosomal subunit.

GTPase that plays an essential role in the late steps of ribosome biogenesis. The sequence is that of GTPase Der from Thermoanaerobacter sp. (strain X514).